The following is a 581-amino-acid chain: Pectinesterase 3 (581 aa).

A signal peptide spans 1 to 55 (MDTIKSFKGYGKVNELEQQAYEKKTRKRLIIIAVSSIVLIAVIIAAVAGVVIHNR). N-linked (GlcNAc...) asparagine glycosylation is found at Asn101, Asn156, Asn200, Asn217, and Asn268. Substrate contacts are provided by Thr348 and Gln378. The active-site Proton donor is the Asp401. A disulfide bond links Cys415 and Cys435. Asp422 functions as the Nucleophile in the catalytic mechanism. An N-linked (GlcNAc...) asparagine glycan is attached at Asn477. 2 residues coordinate substrate: Arg486 and Trp488.

This sequence in the N-terminal section; belongs to the PMEI family. It in the C-terminal section; belongs to the pectinesterase family.

It is found in the secreted. Its subcellular location is the cell wall. It catalyses the reaction [(1-&gt;4)-alpha-D-galacturonosyl methyl ester](n) + n H2O = [(1-&gt;4)-alpha-D-galacturonosyl](n) + n methanol + n H(+). It functions in the pathway glycan metabolism; pectin degradation; 2-dehydro-3-deoxy-D-gluconate from pectin: step 1/5. In terms of biological role, may have roles in the deposition of pectin in developing tissues and in the wall loosening and cell separation that occurs in cell expansion, fruit ripening and abscission. In Phaseolus vulgaris (Kidney bean), this protein is Pectinesterase 3 (MPE3).